The chain runs to 332 residues: 2-oxoglutarate-dependent dioxygenase FG08081 (332 aa).

The region spanning R176–A280 is the Fe2OG dioxygenase domain. Fe cation is bound by residues H201, D203, and H258. R271 contributes to the 2-oxoglutarate binding site.

Belongs to the iron/ascorbate-dependent oxidoreductase family. The cofactor is Fe(2+).

The protein operates within mycotoxin biosynthesis. Functionally, 2-oxoglutarate-dependent dioxygenase; part of the gene cluster that mediates the biosynthesis of butenolide, a mycotoxin that shows antibiotic activity but does not seem to play a major role in the spread of head blight in wheat. Butenolide is derived from glutamic acid via a 4-acetamido-2-butenoic acid intermediate. The predicted function of the NADH:flavin oxidoreductase FG08077, the cytochrome P450 monooxygenase FG08079, the decarboxylase FG08083, and the putative acetyltransferase FG08082 are consistent with this pathway, however, the respective activities of the butelonide biosynthesis cluster enzymes have still to be experimentally determined. The polypeptide is 2-oxoglutarate-dependent dioxygenase FG08081 (Gibberella zeae (strain ATCC MYA-4620 / CBS 123657 / FGSC 9075 / NRRL 31084 / PH-1) (Wheat head blight fungus)).